A 513-amino-acid polypeptide reads, in one-letter code: Alanine--glyoxylate aminotransferase 2, mitochondrial (513 aa).

A mitochondrion-targeting transit peptide spans 1 to 40 (MSLAWRNLQKPFYLETSLRILQMRPSLSLGASRIAVPKLT). N6-acetyllysine is present on lysine 56. Lysine 70 bears the N6-acetyllysine; alternate mark. At lysine 70 the chain carries N6-succinyllysine; alternate. Lysine 83 carries the N6-acetyllysine modification. N6-acetyllysine; alternate is present on lysine 261. Residue lysine 261 is modified to N6-succinyllysine; alternate. At lysine 303 the chain carries N6-succinyllysine. An N6-(pyridoxal phosphate)lysine modification is found at lysine 349. 2 positions are modified to N6-acetyllysine; alternate: lysine 416 and lysine 419. An N6-succinyllysine; alternate mark is found at lysine 416 and lysine 419. At lysine 453 the chain carries N6-acetyllysine.

Belongs to the class-III pyridoxal-phosphate-dependent aminotransferase family. As to quaternary structure, homotetramer. Pyridoxal 5'-phosphate is required as a cofactor. Expressed in the liver and kidney.

It is found in the mitochondrion. It catalyses the reaction glyoxylate + L-alanine = glycine + pyruvate. The catalysed reaction is (R)-3-amino-2-methylpropanoate + pyruvate = 2-methyl-3-oxopropanoate + L-alanine. The enzyme catalyses 3-oxopropanoate + L-alanine = beta-alanine + pyruvate. It carries out the reaction 2-oxobutanoate + L-alanine = (2S)-2-aminobutanoate + pyruvate. It catalyses the reaction N(omega),N(omega)-dimethyl-L-arginine + pyruvate = 5-(3,3-dimethylguanidino)-2-oxopentanoate + L-alanine. The catalysed reaction is N(omega),N('omega)-dimethyl-L-arginine + pyruvate = 5-(3,3'-dimethylguanidino)-2-oxopentanoate + L-alanine. The enzyme catalyses N(omega),N(omega)-dimethyl-L-arginine + glyoxylate = 5-(3,3-dimethylguanidino)-2-oxopentanoate + glycine. It carries out the reaction N(omega),N('omega)-dimethyl-L-arginine + glyoxylate = 5-(3,3'-dimethylguanidino)-2-oxopentanoate + glycine. It catalyses the reaction N(omega)-methyl-L-arginine + pyruvate = 5-(3-methylguanidino)-2-oxopentanoate + L-alanine. The catalysed reaction is N(omega)-methyl-L-arginine + glyoxylate = 5-(3-methylguanidino)-2-oxopentanoate + glycine. The enzyme catalyses L-ornithine + pyruvate = 5-amino-2-oxopentanoate + L-alanine. It carries out the reaction L-ornithine + glyoxylate = 5-amino-2-oxopentanoate + glycine. It catalyses the reaction (2S)-2-aminobutanoate + glyoxylate = 2-oxobutanoate + glycine. The catalysed reaction is N(omega),N(omega)-dimethyl-L-arginine + oxaloacetate = 5-(3,3-dimethylguanidino)-2-oxopentanoate + L-aspartate. The enzyme catalyses oxaloacetate + L-alanine = L-aspartate + pyruvate. It carries out the reaction N(omega),N(omega)-dimethyl-L-arginine + 2-oxobutanoate = 5-(3,3-dimethylguanidino)-2-oxopentanoate + (2S)-2-aminobutanoate. It catalyses the reaction 2-oxopentanoate + N(omega),N(omega)-dimethyl-L-arginine = 5-(3,3-dimethylguanidino)-2-oxopentanoate + L-2-aminopentanoate. The catalysed reaction is 2-oxohexanoate + N(omega),N(omega)-dimethyl-L-arginine = L-2-aminohexanoate + 5-(3,3-dimethylguanidino)-2-oxopentanoate. Its activity is regulated as follows. (R)-3-amino-2-methylpropionate--pyruvate transaminase and beta-alanine-pyruvate aminotransferase are inhibited by aminooxyacetic acid. In terms of biological role, multifunctional aminotransferase with a broad substrate specificity. Catalyzes the conversion of glyoxylate to glycine using alanine as the amino donor. Catalyzes metabolism of not L- but the D-isomer of D-beta-aminoisobutyric acid to generate 2-methyl-3-oxopropanoate and alanine. Catalyzes the transfer of the amino group from beta-alanine to pyruvate to yield L-alanine and 3-oxopropanoate. Can metabolize NG-monomethyl-L-arginine (NMMA), asymmetric NG,NG-dimethyl-L-arginine (ADMA) and symmetric NG,N'G-dimethyl-L-arginine (SDMA). ADMA is a potent inhibitor of nitric-oxide (NO) synthase, and this activity provides mechanism through which the kidney regulates blood pressure. The sequence is that of Alanine--glyoxylate aminotransferase 2, mitochondrial (Agxt2) from Mus musculus (Mouse).